Consider the following 290-residue polypeptide: Alpha-mannosidase (290 aa).

The active-site Nucleophile is the Asp-17. N-linked (GlcNAc...) asparagine glycosylation is present at Asn-64.

The protein belongs to the glycosyl hydrolase 38 family. As to quaternary structure, dimer. It depends on Zn(2+) as a cofactor.

The enzyme catalyses Hydrolysis of terminal, non-reducing alpha-D-mannose residues in alpha-D-mannosides.. Inhibited by swainsonine but not by 1-desoxymannojirimycin. Functionally, liberates mannose from p-nitrophenyl-alpha-D-mannoside. The protein is Alpha-mannosidase of Lablab purpureus (Hyacinth bean).